The sequence spans 295 residues: Nuclear transcription factor Y subunit A-2 (295 aa).

Residues Tyr139–Lys165 carry the Subunit association domain (SAD) motif. The segment at residues Lys173–Thr198 is a DNA-binding region (NFYA/HAP2-type). Residues His178–Arg189 show a composition bias toward basic residues. The interval His178–Asn244 is disordered. Residues Asn197–Asn209 are compositionally biased toward polar residues. Low complexity predominate over residues Ser216 to Ser233.

Belongs to the NFYA/HAP2 subunit family. In terms of assembly, heterotrimeric transcription factor composed of three components, NF-YA, NF-YB and NF-YC. NF-YB and NF-YC must interact and dimerize for NF-YA association and DNA binding. Component of a heat stress-inducible transcriptional complex with NF-YA and NF-YB subunits made, at least, of NFYA2, NFYB3 and DPB3-1 in cooperation with DREB2A. In terms of tissue distribution, ubiquitous. Expressed in seedlings, roots, petioles, hypocotyls, reproductive organ tissues and leaves.

It localises to the nucleus. Its function is as follows. Stimulates the transcription of various genes by recognizing and binding to a CCAAT motif in promoters. Promotes the expression of heat stress-inducible genes by contributing to the formation of a heat stress-specific transcriptional complex with NF-Y subunits (e.g. DPB3-1, NF-YA2 and NF-YB3) and DREB2A at the promoter of target genes, thus promoting heat tolerance. This chain is Nuclear transcription factor Y subunit A-2, found in Arabidopsis thaliana (Mouse-ear cress).